We begin with the raw amino-acid sequence, 489 residues long: Cytochrome P450 monooxygenase prhB (489 aa).

3 consecutive transmembrane segments (helical) span residues 1-21 (MFSFGFLITAVVFWVVTKVIY), 212-232 (VIFQCLGFFPWIKEPLVMIFA), and 287-307 (LFIGAGAESTATLLMGVAYLL). N-linked (GlcNAc...) asparagine glycosylation is found at Asn-347 and Asn-379. Residue Cys-431 coordinates heme.

The protein belongs to the cytochrome P450 family. It depends on heme as a cofactor.

The protein resides in the membrane. It functions in the pathway secondary metabolite biosynthesis; terpenoid biosynthesis. Functionally, cytochrome P450 monooxygenase; part of the gene cluster that mediates the biosynthesis of paraherquonin, a meroterpenoid with a unique, highly congested hexacyclic molecular architecture. The first step of the pathway is the synthesis of 3,5-dimethylorsellinic acid (DMOA) by the polyketide synthase prhL. Synthesis of DMOA is followed by farnesylation by the prenyltransferase prhE, methylesterification by the methyl-transferase prhM, epoxidation of the prenyl chain by the flavin-dependent monooxygenase prhF, and cyclization of the farnesyl moiety by the terpene cyclase prhH, to yield the tetracyclic intermediate, protoaustinoid A. The short chain dehydrogenase prhI then oxidizes the C-3 alcohol group of the terpene cyclase product to transform protoaustinoid A into protoaustinoid B. The FAD-binding monooxygenase prhJ catalyzes the oxidation of protoaustinoid B into preaustinoid A which is further oxidized into preaustinoid A1 by FAD-binding monooxygenase phrK. Finally, prhA leads to berkeleydione via the berkeleyone B intermediate. PrhA is a multifunctional dioxygenase that first desaturates at C5-C6 to form berkeleyone B, followed by rearrangement of the A/B-ring to form the cycloheptadiene moiety in berkeleydione. Berkeleydione serves as the key intermediate for the biosynthesis of paraherquonin as well as many other meroterpenoids. The cytochrome P450 monooxygenases prhB, prhD, and prhN, as well as the isomerase prhC, are probably involved in the late stage of paraherquonin biosynthesis, after the production of berkeleydione. Especially prhC might be a multifunctional enzyme that catalyzes the D-ring expansion via intramolecular methoxy rearrangement, as well as the hydrolysis of the expanded D-ring. The protein is Cytochrome P450 monooxygenase prhB of Penicillium brasilianum.